A 277-amino-acid chain; its full sequence is 4-deoxy-L-threo-5-hexosulose-uronate ketol-isomerase (277 aa).

Zn(2+) is bound by residues H195, H197, E202, and H244.

This sequence belongs to the KduI family. It depends on Zn(2+) as a cofactor.

The enzyme catalyses 5-dehydro-4-deoxy-D-glucuronate = 3-deoxy-D-glycero-2,5-hexodiulosonate. It participates in glycan metabolism; pectin degradation; 2-dehydro-3-deoxy-D-gluconate from pectin: step 4/5. Catalyzes the isomerization of 5-dehydro-4-deoxy-D-glucuronate to 3-deoxy-D-glycero-2,5-hexodiulosonate. The sequence is that of 4-deoxy-L-threo-5-hexosulose-uronate ketol-isomerase from Oceanobacillus iheyensis (strain DSM 14371 / CIP 107618 / JCM 11309 / KCTC 3954 / HTE831).